Here is a 147-residue protein sequence, read N- to C-terminus: SsrA-binding protein (147 aa).

This sequence belongs to the SmpB family.

It localises to the cytoplasm. Required for rescue of stalled ribosomes mediated by trans-translation. Binds to transfer-messenger RNA (tmRNA), required for stable association of tmRNA with ribosomes. tmRNA and SmpB together mimic tRNA shape, replacing the anticodon stem-loop with SmpB. tmRNA is encoded by the ssrA gene; the 2 termini fold to resemble tRNA(Ala) and it encodes a 'tag peptide', a short internal open reading frame. During trans-translation Ala-aminoacylated tmRNA acts like a tRNA, entering the A-site of stalled ribosomes, displacing the stalled mRNA. The ribosome then switches to translate the ORF on the tmRNA; the nascent peptide is terminated with the 'tag peptide' encoded by the tmRNA and targeted for degradation. The ribosome is freed to recommence translation, which seems to be the essential function of trans-translation. In Mycoplasmopsis agalactiae (strain NCTC 10123 / CIP 59.7 / PG2) (Mycoplasma agalactiae), this protein is SsrA-binding protein.